The primary structure comprises 272 residues: Phosphatidylglycerol--prolipoprotein diacylglyceryl transferase (272 aa).

7 helical membrane passes run 17–37, 55–75, 90–110, 125–145, 174–194, 202–222, and 230–250; these read LQVH…WGLA, LVFY…VLFY, VWTG…AMLF, FIAP…FIGG, PSQI…LWWF, MAVS…MEFF, and GFIL…MLLI. Arginine 138 lines the a 1,2-diacyl-sn-glycero-3-phospho-(1'-sn-glycerol) pocket.

The protein belongs to the Lgt family.

The protein resides in the cell inner membrane. The catalysed reaction is L-cysteinyl-[prolipoprotein] + a 1,2-diacyl-sn-glycero-3-phospho-(1'-sn-glycerol) = an S-1,2-diacyl-sn-glyceryl-L-cysteinyl-[prolipoprotein] + sn-glycerol 1-phosphate + H(+). It functions in the pathway protein modification; lipoprotein biosynthesis (diacylglyceryl transfer). Functionally, catalyzes the transfer of the diacylglyceryl group from phosphatidylglycerol to the sulfhydryl group of the N-terminal cysteine of a prolipoprotein, the first step in the formation of mature lipoproteins. The polypeptide is Phosphatidylglycerol--prolipoprotein diacylglyceryl transferase (Acinetobacter baumannii (strain SDF)).